The following is a 275-amino-acid chain: Dermonecrotic toxin LarSicTox-alphaIII1 (275 aa).

The active site involves His-5. Mg(2+) contacts are provided by Glu-25 and Asp-27. Catalysis depends on His-41, which acts as the Nucleophile. Intrachain disulfides connect Cys-45–Cys-51 and Cys-47–Cys-190. Asp-85 contacts Mg(2+). Asn-252 is a glycosylation site (N-linked (GlcNAc...) asparagine).

Belongs to the arthropod phospholipase D family. Class II subfamily. Mg(2+) serves as cofactor. Expressed by the venom gland.

It is found in the secreted. The catalysed reaction is an N-(acyl)-sphingosylphosphocholine = an N-(acyl)-sphingosyl-1,3-cyclic phosphate + choline. It catalyses the reaction an N-(acyl)-sphingosylphosphoethanolamine = an N-(acyl)-sphingosyl-1,3-cyclic phosphate + ethanolamine. It carries out the reaction a 1-acyl-sn-glycero-3-phosphocholine = a 1-acyl-sn-glycero-2,3-cyclic phosphate + choline. The enzyme catalyses a 1-acyl-sn-glycero-3-phosphoethanolamine = a 1-acyl-sn-glycero-2,3-cyclic phosphate + ethanolamine. Dermonecrotic toxins cleave the phosphodiester linkage between the phosphate and headgroup of certain phospholipids (sphingolipid and lysolipid substrates), forming an alcohol (often choline) and a cyclic phosphate. This toxin acts on sphingomyelin (SM). It may also act on ceramide phosphoethanolamine (CPE), lysophosphatidylcholine (LPC) and lysophosphatidylethanolamine (LPE), but not on lysophosphatidylserine (LPS), and lysophosphatidylglycerol (LPG). It acts by transphosphatidylation, releasing exclusively cyclic phosphate products as second products. Induces dermonecrosis, hemolysis, increased vascular permeability, edema, inflammatory response, and platelet aggregation. The chain is Dermonecrotic toxin LarSicTox-alphaIII1 from Loxosceles arizonica (Arizona brown spider).